The primary structure comprises 267 residues: Type II pantothenate kinase (267 aa).

6 to 13 (DAGGTLIK) is a binding site for ATP. Glu70 acts as the Proton acceptor in catalysis. Residues Thr99, 121–125 (GGMIQ), Tyr137, and Ser225 each bind ATP.

It belongs to the type II pantothenate kinase family. In terms of assembly, homodimer.

Its subcellular location is the cytoplasm. It carries out the reaction (R)-pantothenate + ATP = (R)-4'-phosphopantothenate + ADP + H(+). It functions in the pathway cofactor biosynthesis; coenzyme A biosynthesis; CoA from (R)-pantothenate: step 1/5. Functionally, catalyzes the phosphorylation of pantothenate (Pan), the first step in CoA biosynthesis. This chain is Type II pantothenate kinase, found in Staphylococcus aureus (strain bovine RF122 / ET3-1).